A 125-amino-acid chain; its full sequence is MLPHQNSSYTRQGTNDAQANDMRSPSQLPTSVNIEDPSKLCISSEKLNTPMHNRSRSGIKKHTSVKRSRSFKLFDTLFFGILRLRKQRIRSVKKVRSISSPVLISTTSALALATIEQQPVIGECS.

Residues M1–N33 are compositionally biased toward polar residues. 2 disordered regions span residues M1–E35 and S44–T63. Basic residues predominate over residues N53–T63.

This is an uncharacterized protein from Schizosaccharomyces pombe (strain 972 / ATCC 24843) (Fission yeast).